The following is a 27-amino-acid chain: Flagellar filament 34 kDa core protein (27 aa).

The protein belongs to the bacterial flagellin family. In terms of assembly, the flagellum consists of an outer layer composed of repeating units of FlaA around a core that contains one or all of five antigenically related polypeptides.

Its subcellular location is the periplasmic flagellum. The protein localises to the periplasm. Its function is as follows. Component of the core of the flagella. This chain is Flagellar filament 34 kDa core protein, found in Spirochaeta aurantia.